The following is a 1161-amino-acid chain: Perforin-like protein 1 (1161 aa).

A helical membrane pass occupies residues Leu67 to Val86. The disordered stretch occupies residues Pro154–Phe329. Basic and acidic residues-rich tracts occupy residues Thr162 to Glu177 and Ala184 to Ser194. The segment covering Pro201–Asp211 has biased composition (acidic residues). Positions Asn222–Asp234 are enriched in polar residues. The span at Gly238–Ser249 shows a compositional bias: low complexity. A glycan (N-linked (GlcNAc...) asparagine) is linked at Asn257. The segment covering Asn264 to Lys283 has biased composition (basic residues). The segment covering Asn309 to Asp322 has biased composition (polar residues). An N-linked (GlcNAc...) asparagine glycan is attached at Asn344. The segment at Ala353–Ser381 is disordered. Positions Ser361 to Pro378 are enriched in polar residues. Residues Leu463–Thr817 form the MACPF domain. A disulfide bridge connects residues Cys539 and Cys602. Asn550 carries an N-linked (GlcNAc...) asparagine glycan. A beta stranded transmembrane segment spans residues Tyr554–Ser589. Residue Asn618 is glycosylated (N-linked (GlcNAc...) asparagine). An intrachain disulfide couples Cys643 to Cys657. Residues Arg694–Asn740 form a beta stranded membrane-spanning segment. The tract at residues Gly716–Glu736 is disordered. An N-linked (GlcNAc...) asparagine glycan is attached at Asn755. 6 disulfide bridges follow: Cys845-Cys900, Cys874-Cys881, Cys928-Cys981, Cys957-Cys964, Cys1019-Cys1080, and Cys1047-Cys1054. 3 N-linked (GlcNAc...) asparagine glycosylation sites follow: Asn1022, Asn1050, and Asn1111. Residues Val1094–Ser1149 form a disordered region. Over residues Gly1099–Asn1111 the composition is skewed to basic residues.

This sequence belongs to the MPEG1 family. As to quaternary structure, homooligomer; forms a homooligomeric pore.

It localises to the parasitophorous vacuole membrane. The protein resides in the cytoplasmic vesicle. The protein localises to the secretory vesicle. Its subcellular location is the microneme membrane. In terms of biological role, pore-forming protein that promotes parasite exit from host cells: mediates formation of a pore in the parasitophorous vacuolar membrane, leading to membrane permeabilization, thereby facilitating parasite egress from host cells. May also form a pore in the host plasma membrane. Preferentially binds inner leaflet lipids, such as phosphatidylethanolamine (PE) or phosphatidylserine (PS). The sequence is that of Perforin-like protein 1 from Toxoplasma gondii (strain ATCC 50861 / VEG).